The chain runs to 483 residues: Membrane-bound lytic murein transglycosylase F (483 aa).

The first 18 residues, 1–18 (MKGLIARFIAGFALLLWA), serve as a signal peptide directing secretion. The tract at residues 19–267 (WDMVFPWQQL…RIEEKYFNHL (249 aa)) is non-LT domain. The segment at 269-483 (HFDYVDIQSY…SKESDSTLKE (215 aa)) is LT domain. Residue glutamate 312 is part of the active site. The tract at residues 458–483 (QQIQNNEEQPSVPQEISKESDSTLKE) is disordered. Positions 473–483 (ISKESDSTLKE) are enriched in basic and acidic residues.

It in the N-terminal section; belongs to the bacterial solute-binding protein 3 family. The protein in the C-terminal section; belongs to the transglycosylase Slt family.

The protein localises to the cell outer membrane. The enzyme catalyses Exolytic cleavage of the (1-&gt;4)-beta-glycosidic linkage between N-acetylmuramic acid (MurNAc) and N-acetylglucosamine (GlcNAc) residues in peptidoglycan, from either the reducing or the non-reducing ends of the peptidoglycan chains, with concomitant formation of a 1,6-anhydrobond in the MurNAc residue.. In terms of biological role, murein-degrading enzyme that degrades murein glycan strands and insoluble, high-molecular weight murein sacculi, with the concomitant formation of a 1,6-anhydromuramoyl product. Lytic transglycosylases (LTs) play an integral role in the metabolism of the peptidoglycan (PG) sacculus. Their lytic action creates space within the PG sacculus to allow for its expansion as well as for the insertion of various structures such as secretion systems and flagella. The sequence is that of Membrane-bound lytic murein transglycosylase F from Actinobacillus pleuropneumoniae serotype 3 (strain JL03).